The chain runs to 345 residues: Beta-ketoacyl-[acyl-carrier-protein] synthase III (345 aa).

Active-site residues include cysteine 114 and histidine 272. The tract at residues 273 to 277 is ACP-binding; the sequence is QANQR. The active site involves asparagine 302.

Belongs to the thiolase-like superfamily. FabH family. In terms of assembly, homodimer.

The protein localises to the cytoplasm. The catalysed reaction is malonyl-[ACP] + acetyl-CoA + H(+) = 3-oxobutanoyl-[ACP] + CO2 + CoA. Its pathway is lipid metabolism; fatty acid biosynthesis. In terms of biological role, catalyzes the condensation reaction of fatty acid synthesis by the addition to an acyl acceptor of two carbons from malonyl-ACP. Catalyzes the first condensation reaction which initiates fatty acid synthesis and may therefore play a role in governing the total rate of fatty acid production. Possesses both acetoacetyl-ACP synthase and acetyl transacylase activities. Its substrate specificity determines the biosynthesis of branched-chain and/or straight-chain of fatty acids. The sequence is that of Beta-ketoacyl-[acyl-carrier-protein] synthase III from Rhodopirellula baltica (strain DSM 10527 / NCIMB 13988 / SH1).